Reading from the N-terminus, the 289-residue chain is E3 ubiquitin-protein ligase MARCHF8 (289 aa).

The tract at residues 1-68 (MNMPLHQISA…SAPVSSFPRT (68 aa)) is disordered. A compositionally biased stretch (basic and acidic residues) spans 25–39 (KTKEKEREEQNEKTL). The segment covering 50-64 (SKAGGSSVASAPVSS) has biased composition (low complexity). An RING-CH-type zinc finger spans residues 70–131 (VTPSNQDICR…ELCKYEFIME (62 aa)). Zn(2+) contacts are provided by Cys78, Cys81, Cys95, Cys97, His105, Cys108, Cys121, and Cys124. Transmembrane regions (helical) follow at residues 155–175 (CSVT…YVLI) and 195–215 (FWTK…FMYV).

As to quaternary structure, interacts with CD86.

The protein localises to the golgi apparatus membrane. It is found in the endoplasmic reticulum membrane. Its subcellular location is the cytoplasmic vesicle membrane. The protein resides in the lysosome membrane. It localises to the early endosome membrane. It catalyses the reaction S-ubiquitinyl-[E2 ubiquitin-conjugating enzyme]-L-cysteine + [acceptor protein]-L-lysine = [E2 ubiquitin-conjugating enzyme]-L-cysteine + N(6)-ubiquitinyl-[acceptor protein]-L-lysine.. It participates in protein modification; protein ubiquitination. In terms of biological role, E3 ubiquitin-protein ligase that plays several important roles in innate immunity and adaptive immunity. Mediates ubiquitination of CD86 and MHC class II proteins, such as HLA-DR alpha and beta, and promotes their subsequent endocytosis and sorting to lysosomes via multivesicular bodies. Possesses a very broad antiviral activity by specifically inactivating different viral fusion proteins. Targets and ubiquitinates cytoplasmic lysine residues of viral envelope glycoproteins with single transmembrane domains leading to their lysosomal degradation. Mediates the regulation of constitutive ubiquitination and trafficking of the viral restriction factor BST2 within the endocytic pathway. Plays a role in maintenance of immune tolerance to self by promoting the turnover and proteasomal degradation of PD-L1/CD274 via ubiquitination. Catalyzes the 'Lys-63'-linked polyubiquitylation of cGAS thereby inhibiting its DNA binding ability and impairing its antiviral innate immunity. Negatively regulates IL7-mediated T-cell homeostasis by mediating 'Lys-27'-linked polyubiquitination of IL7R, leading to its lysosomal degradation. This is E3 ubiquitin-protein ligase MARCHF8 (MARCHF8) from Bos taurus (Bovine).